We begin with the raw amino-acid sequence, 342 residues long: S-adenosylmethionine:tRNA ribosyltransferase-isomerase (342 aa).

It belongs to the QueA family. Monomer.

It localises to the cytoplasm. The enzyme catalyses 7-aminomethyl-7-carbaguanosine(34) in tRNA + S-adenosyl-L-methionine = epoxyqueuosine(34) in tRNA + adenine + L-methionine + 2 H(+). Its pathway is tRNA modification; tRNA-queuosine biosynthesis. Its function is as follows. Transfers and isomerizes the ribose moiety from AdoMet to the 7-aminomethyl group of 7-deazaguanine (preQ1-tRNA) to give epoxyqueuosine (oQ-tRNA). In Streptococcus pneumoniae (strain ATCC BAA-255 / R6), this protein is S-adenosylmethionine:tRNA ribosyltransferase-isomerase.